Consider the following 291-residue polypeptide: Ecto-ADP-ribosyltransferase 5 (291 aa).

The N-terminal stretch at 1 to 22 (MALAALMIALGSLGLHTWQAQA) is a signal peptide. A disulfide bridge connects residues Cys-42 and Cys-258. The region spanning 62–252 (ALLRESWEAA…LVTLWSYNQT (191 aa)) is the TR mART core domain. Tyr-99 serves as a coordination point for NAD(+). A glycan (N-linked (GlcNAc...) asparagine) is linked at Asn-101. NAD(+)-binding residues include Arg-160 and Gln-180. Residue Arg-160 is part of the active site. Residue Ser-183 is part of the active site. N-linked (GlcNAc...) asparagine glycosylation occurs at Asn-196. An NAD(+)-binding site is contributed by Ser-214. Glu-221 is a catalytic residue. Asn-250 is a glycosylation site (N-linked (GlcNAc...) asparagine).

Belongs to the Arg-specific ADP-ribosyltransferase family.

It is found in the secreted. It catalyses the reaction L-arginyl-[protein] + NAD(+) = N(omega)-(ADP-D-ribosyl)-L-arginyl-[protein] + nicotinamide + H(+). The protein is Ecto-ADP-ribosyltransferase 5 (ART5) of Homo sapiens (Human).